Reading from the N-terminus, the 640-residue chain is Probable Ufm1-specific protease (640 aa).

Catalysis depends on residues Cys467, Asp591, and His593.

The protein belongs to the peptidase C78 family.

Thiol protease which recognizes and hydrolyzes the peptide bond at the C-terminal Gly of ufm-1, a ubiquitin-like modifier protein bound to a number of target proteins. In Oryza sativa subsp. japonica (Rice), this protein is Probable Ufm1-specific protease.